The primary structure comprises 63 residues: Large ribosomal subunit protein eL37 (63 aa).

C20, C23, C35, and C38 together coordinate Zn(2+). The C4-type zinc finger occupies 20–38 (CRRCGRRAFNVKKGYCAAC).

It belongs to the eukaryotic ribosomal protein eL37 family. Requires Zn(2+) as cofactor.

In terms of biological role, binds to the 23S rRNA. This is Large ribosomal subunit protein eL37 from Thermococcus gammatolerans (strain DSM 15229 / JCM 11827 / EJ3).